We begin with the raw amino-acid sequence, 499 residues long: Alpha-amylase A type-1/2 (499 aa).

An N-terminal signal peptide occupies residues 1-21; the sequence is MMVAWWSLFLYGLQVAAPALA. Cys-51 and Cys-59 are disulfide-bonded. Substrate-binding residues include Gln-56 and Trp-104. Asn-142 contacts Ca(2+). Residue His-143 participates in substrate binding. Cys-171 and Cys-185 are disulfide-bonded. Positions 183 and 196 each coordinate Ca(2+). An N-linked (GlcNAc...) asparagine glycan is attached at Asn-218. Residue Arg-225 coordinates substrate. Ca(2+) is bound by residues Asp-227, His-231, and Glu-251. Catalysis depends on Asp-227, which acts as the Nucleophile. 230 to 231 lines the substrate pocket; sequence KH. Glu-251 functions as the Proton donor in the catalytic mechanism. Gly-255 contributes to the substrate binding site. The cysteines at positions 261 and 304 are disulfide-linked. Substrate is bound by residues Asp-318 and Arg-365. A disulfide bridge connects residues Cys-461 and Cys-496.

This sequence belongs to the glycosyl hydrolase 13 family. In terms of assembly, monomer. Ca(2+) serves as cofactor.

The protein localises to the secreted. It catalyses the reaction Endohydrolysis of (1-&gt;4)-alpha-D-glucosidic linkages in polysaccharides containing three or more (1-&gt;4)-alpha-linked D-glucose units.. The polypeptide is Alpha-amylase A type-1/2 (amy1) (Aspergillus oryzae (strain ATCC 42149 / RIB 40) (Yellow koji mold)).